Here is a 281-residue protein sequence, read N- to C-terminus: Bifunctional protein FolD (281 aa).

Residues 165–167, Thr-192, and Val-233 each bind NADP(+); that span reads GRG.

Belongs to the tetrahydrofolate dehydrogenase/cyclohydrolase family. In terms of assembly, homodimer.

The enzyme catalyses (6R)-5,10-methylene-5,6,7,8-tetrahydrofolate + NADP(+) = (6R)-5,10-methenyltetrahydrofolate + NADPH. It catalyses the reaction (6R)-5,10-methenyltetrahydrofolate + H2O = (6R)-10-formyltetrahydrofolate + H(+). The protein operates within one-carbon metabolism; tetrahydrofolate interconversion. Its function is as follows. Catalyzes the oxidation of 5,10-methylenetetrahydrofolate to 5,10-methenyltetrahydrofolate and then the hydrolysis of 5,10-methenyltetrahydrofolate to 10-formyltetrahydrofolate. This Mycobacterium bovis (strain BCG / Tokyo 172 / ATCC 35737 / TMC 1019) protein is Bifunctional protein FolD.